A 474-amino-acid polypeptide reads, in one-letter code: Trigger factor (474 aa).

The PPIase FKBP-type domain occupies 171 to 258; that stretch reads GDVAVIDFQG…LKELKTRDLP (88 aa). A disordered region spans residues 441–474; that stretch reads TEVDAASATVETTATETAEEAPEAPKAKKGKKKA. Over residues 444–456 the composition is skewed to low complexity; sequence DAASATVETTATE.

This sequence belongs to the FKBP-type PPIase family. Tig subfamily.

Its subcellular location is the cytoplasm. The enzyme catalyses [protein]-peptidylproline (omega=180) = [protein]-peptidylproline (omega=0). In terms of biological role, involved in protein export. Acts as a chaperone by maintaining the newly synthesized protein in an open conformation. Functions as a peptidyl-prolyl cis-trans isomerase. The sequence is that of Trigger factor from Synechococcus elongatus (strain ATCC 33912 / PCC 7942 / FACHB-805) (Anacystis nidulans R2).